Consider the following 883-residue polypeptide: HTH-type transcriptional regulator AlkS (883 aa).

The HTH luxR-type domain maps to 816–881 (ENKAGDFLTL…QAIIEAERQG (66 aa)). The segment at residues 840-859 (NKQIATKMYVTEDAIKWHMR) is a DNA-binding region (H-T-H motif).

It participates in hydrocarbon metabolism; alkane degradation. May act as a transcriptional regulator of AlkB. This chain is HTH-type transcriptional regulator AlkS (alkS), found in Pseudomonas putida (Arthrobacter siderocapsulatus).